The chain runs to 676 residues: MAMGLIRLLSIAFTLVLLSILPLHLSLADEITSIESVPDLQKLMYVAVDGFPCVRLLNLSGEIGCSNPGINKVVAPIIKLKDVKDLVQPHTILVTADEMEDFFTRVSTDLSFASKIGGVLVESGSNFQQKLKGFSPDKRFPQAQFSPYENVEYKWNSAASSIMWRNYNFPVYLLSESGISAVHEILSKKKMKHGTYTSDVAEFNMVMETTKAGTHNSEACLQEGTCLPLGGYSVWSSLPPISVSSSNNRKPVVLTVASMDTASFFRDKSFGADSPISGLVALLGAVDALSRVDGISNLKKQLVFLVLTGETWGYLGSRRFLHELDLHSDAVAGLSNTSIETVLEIGSVGKGLSGGINTFFAHKTRVSSVTNMTLDALKIAQDSLASKNIKILSADTANPGIPPSSLMAFMRKNPQTSAVVLEDFDTNFVNKFYHSHLDDLSNINSSSVVAAASVVARTLYILASDNKDTSNSALGSIHVNASFVEELLTCLLACEPGLSCNLVKDYISPTNTCPGNYAGVILGEPSSKPYLGYVGDVSRFLWNFLADKTSVQKGNTTSVCSKGVCSKTDEVCIKAESNKEGTCVVSTTRYVPAYSTRLKYNDGAWTILPQNSSDSMGMVDPVWTESNWDTLRVHVYTVQHSAYDNAVLVAGITVTTLAYIGILAAKSIITKALKQD.

Positions 1-28 (MAMGLIRLLSIAFTLVLLSILPLHLSLA) are cleaved as a signal peptide. Residues 29–644 (DEITSIESVP…VYTVQHSAYD (616 aa)) are Extracellular-facing. Asparagine 58, asparagine 336, asparagine 371, asparagine 444, asparagine 480, asparagine 555, and asparagine 611 each carry an N-linked (GlcNAc...) asparagine glycan. The chain crosses the membrane as a helical span at residues 645–665 (NAVLVAGITVTTLAYIGILAA). Residues 666 to 676 (KSIITKALKQD) lie on the Cytoplasmic side of the membrane.

The protein belongs to the nicastrin family. In terms of assembly, probable component of the gamma-secretase complex, a complex composed of a presenilin homodimer, nicastrin, APH1 and PEN2.

The protein resides in the membrane. Functionally, probable subunit of the gamma-secretase complex, an endoprotease complex that catalyzes the intramembrane cleavage of integral membrane proteins such as Notch. The chain is Nicastrin from Arabidopsis thaliana (Mouse-ear cress).